We begin with the raw amino-acid sequence, 619 residues long: Protein CPn_1016/CP_0837/CPj1016/CpB1054 (619 aa).

The tract at residues 591–619 is disordered; sequence NAKKSEEQTSPQETPEVIRVSYPTTTSAL.

Belongs to the chlamydial CPn_1016/CT_858/TC_0248 family.

In Chlamydia pneumoniae (Chlamydophila pneumoniae), this protein is Protein CPn_1016/CP_0837/CPj1016/CpB1054.